Here is an 828-residue protein sequence, read N- to C-terminus: Periplasmic nitrate reductase (828 aa).

Residues 1–31 (MKLSRRSFMKANAVAAAAAAAGLSVPGVARA) constitute a signal peptide (tat-type signal). In terms of domain architecture, 4Fe-4S Mo/W bis-MGD-type spans 39–95 (IKWDKAPCRFCGTGCGVLVGTQQGRVVACQGDPDAPVNRGLNCIKGYFLPKIMYGKD). Residues Cys-46, Cys-49, Cys-53, and Cys-81 each coordinate [4Fe-4S] cluster. Mo-bis(molybdopterin guanine dinucleotide) is bound by residues Lys-83, Gln-150, Asn-175, Cys-179, 212–219 (WGSNMAEM), 243–247 (STYQH), 262–264 (QSD), Met-372, Gln-376, Asn-482, 508–509 (SD), Lys-531, Asp-558, and 718–727 (TGRVLEHWHT). Residue Phe-794 coordinates substrate. Residues Asn-802 and Lys-819 each contribute to the Mo-bis(molybdopterin guanine dinucleotide) site.

The protein belongs to the prokaryotic molybdopterin-containing oxidoreductase family. NasA/NapA/NarB subfamily. As to quaternary structure, component of the periplasmic nitrate reductase NapAB complex composed of NapA and NapB. The cofactor is [4Fe-4S] cluster. Mo-bis(molybdopterin guanine dinucleotide) is required as a cofactor. Predicted to be exported by the Tat system. The position of the signal peptide cleavage has not been experimentally proven.

Its subcellular location is the periplasm. The catalysed reaction is 2 Fe(II)-[cytochrome] + nitrate + 2 H(+) = 2 Fe(III)-[cytochrome] + nitrite + H2O. Its function is as follows. Catalytic subunit of the periplasmic nitrate reductase complex NapAB. Receives electrons from NapB and catalyzes the reduction of nitrate to nitrite. The sequence is that of Periplasmic nitrate reductase from Escherichia coli O81 (strain ED1a).